A 140-amino-acid chain; its full sequence is 3-hydroxyacyl-[acyl-carrier-protein] dehydratase FabZ (140 aa).

Residue His-47 is part of the active site.

Belongs to the thioester dehydratase family. FabZ subfamily.

Its subcellular location is the cytoplasm. It catalyses the reaction a (3R)-hydroxyacyl-[ACP] = a (2E)-enoyl-[ACP] + H2O. Its function is as follows. Involved in unsaturated fatty acids biosynthesis. Catalyzes the dehydration of short chain beta-hydroxyacyl-ACPs and long chain saturated and unsaturated beta-hydroxyacyl-ACPs. The protein is 3-hydroxyacyl-[acyl-carrier-protein] dehydratase FabZ of Streptococcus uberis (strain ATCC BAA-854 / 0140J).